A 327-amino-acid chain; its full sequence is uncharacterized protein (327 aa).

Residues 1 to 24 (MKQPGFIRLATLALLSTLSFFSHG) form the signal peptide.

This is an uncharacterized protein from Salmonella typhimurium (strain LT2 / SGSC1412 / ATCC 700720).